Consider the following 580-residue polypeptide: Phosphatase and actin regulator 1 (580 aa).

2 positions are modified to phosphoserine: Ser-67 and Ser-78. Phosphothreonine is present on Thr-104. The Nuclear localization signal motif lies at 108–129 (RRRSKFANLGRIFKPWKWRKKK). The stretch at 138–163 (AALERKISMRQSREELIKRGVLKEIY) is one RPEL 1 repeat. The segment at 331-351 (EQRVPCSTSYHSSGLHSSDGV) is disordered. Positions 337–348 (STSYHSSGLHSS) are enriched in low complexity. RPEL repeat units lie at residues 422–447 (DSLA…PRQT), 460–485 (TKLT…KPRN), and 498–523 (RRLT…IRFS). The interval 462–494 (LTRRLSQRPTAEELEQRNILKPRNEQEEQEEKR) is disordered. Ser-467 is modified (phosphoserine). Basic and acidic residues predominate over residues 471-494 (TAEELEQRNILKPRNEQEEQEEKR). Ser-505 bears the Phosphoserine mark.

Belongs to the phosphatase and actin regulator family. In terms of assembly, interacts (via RPEL repeats) with ACTA1 and PPP1CA; ACTA1 and PPP1CA compete for the same binding site. As to expression, selectively expressed in brain. High levels are found in the olfactory tubercle, nucleus accumbens core and shell, caudate-putamen, cerebral cortex, hippocampus and piriform cortex. Moderate to high levels in the olfactory bulb, arcuate and ventromedial hypothalamus, subthalamic nucleus, amygdala, lateral septum, habenula and thalamus. Low expression, if any, in substantia nigra pars compacta/pars reticula and globus pallidus (at protein level).

The protein resides in the cytoplasm. It is found in the synapse. Its subcellular location is the nucleus. Its function is as follows. Binds actin monomers (G actin) and plays a role in multiple processes including the regulation of actin cytoskeleton dynamics, actin stress fibers formation, cell motility and survival, formation of tubules by endothelial cells, and regulation of PPP1CA activity. Involved in the regulation of cortical neuron migration and dendrite arborization. This is Phosphatase and actin regulator 1 (Phactr1) from Rattus norvegicus (Rat).